Consider the following 230-residue polypeptide: Sugar fermentation stimulation protein homolog (230 aa).

The protein belongs to the SfsA family.

The chain is Sugar fermentation stimulation protein homolog from Clostridium acetobutylicum (strain ATCC 824 / DSM 792 / JCM 1419 / IAM 19013 / LMG 5710 / NBRC 13948 / NRRL B-527 / VKM B-1787 / 2291 / W).